The following is a 286-amino-acid chain: uncharacterized protein (286 aa).

The AB hydrolase-1 domain occupies 26–268 (PLIILCHGFC…DACHYDIYEG (243 aa)).

It belongs to the AB hydrolase superfamily.

This is an uncharacterized protein from Escherichia coli.